The following is a 294-amino-acid chain: Cell division control protein 2 homolog A (294 aa).

The 284-residue stretch at 4 to 287 (YEKVEKIGEG…ARNALQHEYF (284 aa)) folds into the Protein kinase domain. ATP-binding positions include 10-18 (IGEGTYGVV) and K33. T14 carries the phosphothreonine modification. Y15 is subject to Phosphotyrosine. The active-site Proton acceptor is the D127. T161 carries the post-translational modification Phosphothreonine; by CAK.

Belongs to the protein kinase superfamily. CMGC Ser/Thr protein kinase family. CDC2/CDKX subfamily.

It carries out the reaction L-seryl-[protein] + ATP = O-phospho-L-seryl-[protein] + ADP + H(+). The enzyme catalyses L-threonyl-[protein] + ATP = O-phospho-L-threonyl-[protein] + ADP + H(+). The catalysed reaction is [DNA-directed RNA polymerase] + ATP = phospho-[DNA-directed RNA polymerase] + ADP + H(+). With respect to regulation, phosphorylation at Thr-14 or Tyr-15 inactivates the enzyme, while phosphorylation at Thr-161 activates it. Plays a key role in the control of the eukaryotic cell cycle. This Antirrhinum majus (Garden snapdragon) protein is Cell division control protein 2 homolog A (CDC2A).